Here is a 504-residue protein sequence, read N- to C-terminus: Zinc finger protein AEBP2 (504 aa).

Residues 1–219 (MAAALADMAD…SRMDSEDSIS (219 aa)) form a disordered region. Residue A2 is modified to N-acetylalanine. A compositionally biased stretch (low complexity) spans 16 to 30 (RLSPLSPGSPGPAAR). Residues S18, S21, and S24 each carry the phosphoserine modification. Residues 36 to 49 (PEEEEEEDDEEAEA) show a composition bias toward acidic residues. The segment covering 59 to 69 (GGAGGGAGGGE) has biased composition (gly residues). Residues 86-110 (GDEDEDEEDDEDEGSSSGGAEEESS) are compositionally biased toward acidic residues. Residues 129–140 (SLSPGAASSSSG) are compositionally biased toward low complexity. Residue S131 is modified to Phosphoserine. Residues 142-153 (GDGKEGLEEPKG) are compositionally biased toward basic and acidic residues. 2 stretches are compositionally biased toward gly residues: residues 154-168 (PRGGPGGPGSSGGGS) and 178-189 (GDEGYGTGGGGS). S199, S203, and S204 each carry phosphoserine. Residues 202 to 287 (MSSDGEPLSR…IHVDGQRGGV (86 aa)) form an interaction with RBBP4 region. The C2H2-type 1 zinc-finger motif lies at 254 to 279 (YNCCWDQCQACFNSSPDLADHIRSIH). The C2H2-type 2; degenerate zinc finger occupies 293–315 (KGCKVYNTPSTSQSWLQRHMLTH). Residues 321 to 345 (FKCVVGGCNASFASQGGLARHVPTH) form a C2H2-type 3 zinc finger. Over residues 345–358 (HFSQQNSSKVSSQP) the composition is skewed to polar residues. A disordered region spans residues 345 to 387 (HFSQQNSSKVSSQPKAKEESPSKAGMNKRRKLKNKRRRSLPRP). Residues 370–385 (MNKRRKLKNKRRRSLP) are compositionally biased toward basic residues. The residue at position 383 (S383) is a Phosphoserine. The interval 400-471 (RHRAICFNLS…QLKTKVVHLS (72 aa)) is interaction with SUZ12. The segment at 488 to 504 (TMPQKRLKRFDILNFPR) is important for nucleosome binding activity of the PRC2 complex.

This sequence belongs to the AEBP2/jing C2H2-type zinc-finger family. Self-associates. Associates with the PRC2 complex, which consists of the core components EED, EZH1 or EZH2, SUZ12, and RBBP4, and various combinations of accessory subunits including AEBP2, JARID2, PHF19, MTF2 and EPOP. Found in a monomeric PRC2.2 (class 2) complex consisting of at least SUZ12, RBBP4, AEBP2 and JARID2. Within the PRC2 complex, interacts directly with SUZ12; competes with PHF19 for SUZ12 binding. Interacts with EED, EZH2, and RBBP4. May also interact with RBBP7. Expressed in brain, brown adipose tissue, white adipose tissue, heart, kidney, lung, skeletal muscle, small intestine and spleen. Expressed at low levels in liver.

The protein resides in the nucleus. Its function is as follows. Acts as an accessory subunit for the core Polycomb repressive complex 2 (PRC2), which mediates histone H3K27 (H3K27me3) trimethylation on chromatin leading to transcriptional repression of the affected target gene. Plays a role in nucleosome localization of the PRC2 complex. The chain is Zinc finger protein AEBP2 (Aebp2) from Mus musculus (Mouse).